The chain runs to 1067 residues: [F-actin]-monooxygenase MICAL1 (1067 aa).

A monooxygenase domain region spans residues 1–489 (MASPTSTNPA…RDLYDVLAKE (489 aa)). Residues C95, 114–116 (EKR), 121–123 (RHN), F181, Y293, and D393 contribute to the FAD site. The residue at position 475 (T475) is a Phosphothreonine. In terms of domain architecture, Calponin-homology (CH) spans 508–612 (AGTQEELLRW…YLSHFHSAFK (105 aa)). Phosphoserine is present on S617. The segment at 645–688 (SRAKENAEDAGGKKLRLEMEAETPSTEVPPDPEPGVPLTPPSQH) is disordered. Residues 646–663 (RAKENAEDAGGKKLRLEM) show a composition bias toward basic and acidic residues. The stretch at 646–666 (RAKENAEDAGGKKLRLEMEAE) forms a coiled coil. Residues 671-684 (EVPPDPEPGVPLTP) are compositionally biased toward pro residues. The LIM zinc-binding domain occupies 695–757 (DLCALCGEHL…LQHLPQTDHK (63 aa)). Zn(2+) contacts are provided by C697, C700, H718, C721, C724, C727, C747, and H750. A compositionally biased stretch (basic and acidic residues) spans 755–766 (DHKAEGSDRGPE). 2 disordered regions span residues 755–838 (DHKA…RSCS) and 867–886 (KEEK…VPLD). The segment covering 773-789 (PSENSMPPGLSTPTASQ) has biased composition (polar residues). Residues S872, S875, and S876 each carry the phosphoserine modification. Acidic residues predominate over residues 876–886 (SEEEEEDVPLD). Residues 901-1067 (GTMNNYPTWR…ELALGTGAQG (167 aa)) form an important for interaction with RAB8A region. One can recognise a bMERB domain in the interval 918–1067 (KEEEMKRFCK…ELALGTGAQG (150 aa)). 2 coiled-coil regions span residues 919-962 (EEEM…QSSS) and 999-1027 (NLEE…AADR). Position 1057 is a phosphoserine (S1057).

Belongs to the Mical family. Interacts with STK38 and STK38L. Interacts with RAB1B, RAB8A, RAB10, RAB13, RAB15 and RAB35 (in their GTP-bound forms); binding to RAB1B is of low affinity compared to other Rab proteins; at least in case of RAB8A and RAB10 can bind 2 molecules of the Rab proteins simultaneously; ternary complex formation of RAB8A, RAB13 and MICAL1 is possible. Associates with the SH3 domain of NEDD9. Interacts with VIM and PLXNA3. Interacts with GRAF1/ARHGAP26, GRAF2/ARHGAP10, RAB8A, RAB8B and RAB10; may bind simultaneously to GRAFs and Rabs and connects GRAFs to Rabs. Does not interact with RAB1 and RAB11A. Requires FAD as cofactor. As to expression, expressed in the thymus, lung, spleen, kidney, testis and hematopoietic cells.

Its subcellular location is the cytoplasm. It is found in the cytoskeleton. The protein localises to the endosome membrane. The protein resides in the midbody. It carries out the reaction L-methionyl-[F-actin] + NADPH + O2 + H(+) = L-methionyl-(R)-S-oxide-[F-actin] + NADP(+) + H2O. The enzyme catalyses NADPH + O2 + H(+) = H2O2 + NADP(+). Functionally, monooxygenase that promotes depolymerization of F-actin by mediating oxidation of specific methionine residues on actin to form methionine-sulfoxide, resulting in actin filament disassembly and preventing repolymerization. In the absence of actin, it also functions as a NADPH oxidase producing H(2)O(2). Acts as a cytoskeletal regulator that connects NEDD9 to intermediate filaments. Also acts as a negative regulator of apoptosis via its interaction with STK38 and STK38L; acts by antagonizing STK38 and STK38L activation by MST1/STK4. Involved in regulation of lamina-specific connectivity in the nervous system such as the development of lamina-restricted hippocampal connections. Through redox regulation of the actin cytoskeleton controls the intracellular distribution of secretory vesicles containing L1/neurofascin/NgCAM family proteins in neurons, thereby regulating their cell surface levels. May act as Rab effector protein and play a role in vesicle trafficking. Promotes endosomal tubule extension by associating with RAB8 (RAB8A or RAB8B), RAB10 and GRAF (GRAF1/ARHGAP26 or GRAF2/ARHGAP10) on the endosomal membrane which may connect GRAFs to Rabs, thereby participating in neosynthesized Rab8-Rab10-Rab11-dependent protein export. The polypeptide is [F-actin]-monooxygenase MICAL1 (MICAL1) (Homo sapiens (Human)).